Here is a 713-residue protein sequence, read N- to C-terminus: MKYTISPQLVIYVGKGQEIKRALYLTPYGILDDKSSIYYFLKTHLNIHNPEIHKRHILLTLKIRQVKGYLSNLLNINDDIIIYSHKNNLEFSYVDNTIFNPFTNTQRKTLIRSDGFLYNIYPGACDFLVIWVTNSKDTPMLEFGSYEEVDSNILKFENHLLDVFNSLDLEMNIESKFNNIFRTNLKSTGLMTIIKKINESDTSYKSLLYKSDEYFINMTGNHFILTDEKLNLSVWDSDSCLAFSSDGDTIVINNVKLFTELVSDINAQMERIKGDVTYKVFLSTPITSRIKLDIETSFVFVETATNNILLSADKKISIILAKNHISIKVKNYIPNIEKYFTFLVVAINSMFNSVQRSSDFTKVETVYWSRICQNTNNKNRKPVIVSSLDVDMKKISNCFYKSKSLEVFINSNGVMFSCIDPMGKYNSIGFLSIFYKLQKMCIPCCFLKDQSHTDTFSSCVYNKDVSNDIISPYILNFGKVVTKSKISFLPIIFDSFLNEGLRISFEQDNKRLKETTGYHVVKSCNGDIIRLRTTSDIIAFVNDKNTILIADDIIYFPMNYFSIGNNIYILVQEIVHEVVLVKKKINKDVISTFSPNSIILRELFPKQTKSVTIRSDSGMELTTDGFLIDGVKFNKDLSSKFMTFTKNVTTSDYISKYFSPLFKYVITESKERFIKTWVINIMLNFESDVNIESSVIISRLEEYYPNHGKKITN.

This sequence belongs to the poxviridae VETF large subunit family. In terms of assembly, heterodimer of a 70 kDa and a 82 kDa subunit. Part of the early transcription complex composed of ETF, RAP94, and the DNA-directed RNA polymerase.

Acts with RNA polymerase to initiate transcription from early gene promoters. Is recruited by the RPO-associated protein of 94 kDa (RAP94) to form the early transcription complex, which also contains the core RNA polymerase. ETF heterodimer binds to early gene promoters. The polypeptide is Early transcription factor 82 kDa subunit (VETFL) (Yaba monkey tumor virus (strain VR587) (YMTV)).